We begin with the raw amino-acid sequence, 149 residues long: Nucleoside diphosphate kinase 1 (149 aa).

ATP contacts are provided by lysine 9, phenylalanine 57, arginine 85, threonine 91, arginine 102, and asparagine 112. Histidine 115 acts as the Pros-phosphohistidine intermediate in catalysis.

Belongs to the NDK family. Requires Mg(2+) as cofactor. Autophosphorylated.

It catalyses the reaction a 2'-deoxyribonucleoside 5'-diphosphate + ATP = a 2'-deoxyribonucleoside 5'-triphosphate + ADP. The catalysed reaction is a ribonucleoside 5'-diphosphate + ATP = a ribonucleoside 5'-triphosphate + ADP. Its function is as follows. Major role in the synthesis of nucleoside triphosphates other than ATP. The ATP gamma phosphate is transferred to the NDP beta phosphate via a ping-pong mechanism, using a phosphorylated active-site intermediate. Also exhibits a kinase-like activity towards histone H1. The protein is Nucleoside diphosphate kinase 1 (NDPK1) of Saccharum officinarum (Sugarcane).